The sequence spans 320 residues: Cytochrome f (320 aa).

A signal peptide spans 1-35 (MEKRNTYDWVTRWVIASFSILTISYMITWTSISNA). Positions 36, 56, 59, and 60 each coordinate heme. A helical membrane pass occupies residues 286–306 (IQGLLVFLASVVLAQIFLVLK).

The protein belongs to the cytochrome f family. As to quaternary structure, the 4 large subunits of the cytochrome b6-f complex are cytochrome b6, subunit IV (17 kDa polypeptide, petD), cytochrome f and the Rieske protein, while the 4 small subunits are PetG, PetL, PetM and PetN. The complex functions as a dimer. The cofactor is heme.

The protein resides in the plastid. The protein localises to the chloroplast thylakoid membrane. Functionally, component of the cytochrome b6-f complex, which mediates electron transfer between photosystem II (PSII) and photosystem I (PSI), cyclic electron flow around PSI, and state transitions. This is Cytochrome f from Welwitschia mirabilis (Tree tumbo).